The chain runs to 565 residues: Heme/hemopexin transporter protein HuxB (565 aa).

An N-terminal signal peptide occupies residues 1–26 (MKMRPRYSVIASAVSLGFVLSKSVMA). The POTRA domain occupies 73–150 (FPLTQVQILD…GTVKILLLKG (78 aa)).

The protein belongs to the TPS (TC 1.B.20) family.

The protein localises to the cell outer membrane. In terms of biological role, likely functions in the release of soluble HxuA from the cell. Functionally, probable member of a two partner secretion pathway (TPS) in which it mediates the secretion of HuxA. The chain is Heme/hemopexin transporter protein HuxB (hxuB) from Haemophilus influenzae (strain 86-028NP).